The primary structure comprises 142 residues: Galectin-16 (142 aa).

A Galectin domain is found at 6–138; that stretch reads VPYKLPVSLS…DVSLDSVLVN (133 aa).

In terms of tissue distribution, predominantly and highly expressed in the placenta where it is localized mainly in the syncytiotrophoblast and in the endothelia of fetal vessels. Also detected in the amnion and chorionic trophoblasts in fetal membranes.

In terms of biological role, binds lactose with high affinity. Strong inducer of T-cell apoptosis. This Homo sapiens (Human) protein is Galectin-16.